We begin with the raw amino-acid sequence, 326 residues long: Vomeronasal type-1 receptor 94 (326 aa).

Residues 1-32 (MSEILLFSPQPLFSYTMNKYSRLYTNSNIRNT) lie on the Extracellular side of the membrane. Residues 33–53 (FFSEIGIGIAANSLLLLFHIF) form a helical membrane-spanning segment. Residues 54–65 (KFIRGQRSRLTD) are Cytoplasmic-facing. A helical membrane pass occupies residues 66–86 (LPIGLLSLIHLLKLLMIAFIA). The Extracellular portion of the chain corresponds to 87-110 (TDIFISWRGWDDIICKFLVYLYRS). A disulfide bond links Cys101 and Cys188. The helical transmembrane segment at 111–130 (FRGLSLCTTCMLSVLQAITL) threads the bilayer. The Cytoplasmic segment spans residues 131–150 (SPRSSCLAKFKHKSPHHVSC). A helical membrane pass occupies residues 151–171 (AILSLSVLYMFISSHLLVSLI). Over 172–203 (ATPNLTTNVFMYVSESCSILPMSYLMQSMFST) the chain is Extracellular. A glycan (N-linked (GlcNAc...) asparagine) is linked at Asn175. A helical membrane pass occupies residues 204–224 (LLAIRDVFLISLMVLSTCYMV). The Cytoplasmic portion of the chain corresponds to 225–254 (ALLCRHRKQTRHLQGTSLSPKASPEKKATH). Residues 255 to 275 (SILMLMSFFVLMSILDSIVSC) traverse the membrane as a helical segment. Residues 276-285 (SRTMFLYDPT) lie on the Extracellular side of the membrane. Residues 286-306 (SYAIQIFVSHIYATVSPFVFM) form a helical membrane-spanning segment. Residues 307–326 (SNEKHIVNFLRSLCKRVINV) lie on the Cytoplasmic side of the membrane.

It belongs to the G-protein coupled receptor 1 family.

It is found in the cell membrane. Functionally, putative pheromone receptor implicated in the regulation of social as well as reproductive behavior. This chain is Vomeronasal type-1 receptor 94 (Vom1r94), found in Rattus norvegicus (Rat).